We begin with the raw amino-acid sequence, 547 residues long: Inositol 1,4,5-trisphosphate receptor-interacting protein-like 1 (547 aa).

The N-terminal stretch at 1 to 22 is a signal peptide; that stretch reads MAVISLMFLAVMYVVHHPLMVS. The Extracellular segment spans residues 23–96; it reads DRMDLDTLAR…PFQAGGQDGG (74 aa). Residues 28-66 adopt a coiled-coil conformation; it reads DTLARSRQLEKRMSEEMRQLEMEFEERSRAAEQKQKVEN. Residues 97 to 117 form a helical membrane-spanning segment; sequence PLGWILGNLWNAGLFCLFLIF. Over 118–547 the chain is Cytoplasmic; it reads ELLRQSMQHE…LPCSPVAGGL (430 aa).

This sequence belongs to the ITPRIP family.

It is found in the cell membrane. Functions as a ligand of CD3E, inhibiting TCR-CD3 complex signaling to regulate T cell activation. Induces stable CD3E-NCK1 binding, thereby preventing the CD3E-ZAP70 interaction and subsequently inhibiting the activation of the downstream ERK-NFkB signaling cascade and calcium influx. This chain is Inositol 1,4,5-trisphosphate receptor-interacting protein-like 1 (Itpripl1), found in Mus musculus (Mouse).